The sequence spans 526 residues: Sterol 14-alpha demethylase CYP51A (526 aa).

A helical membrane pass occupies residues 27 to 47 (IGFAVFLVLSVVLNVLNQLLF). Y123 is a binding site for lanosterol. C470 lines the heme pocket.

The protein belongs to the cytochrome P450 family. It depends on heme as a cofactor.

Its subcellular location is the endoplasmic reticulum membrane. The enzyme catalyses a 14alpha-methyl steroid + 3 reduced [NADPH--hemoprotein reductase] + 3 O2 = a Delta(14) steroid + formate + 3 oxidized [NADPH--hemoprotein reductase] + 4 H2O + 4 H(+). The catalysed reaction is a 14alpha-methyl steroid + reduced [NADPH--hemoprotein reductase] + O2 = a 14alpha-hydroxymethyl steroid + oxidized [NADPH--hemoprotein reductase] + H2O + H(+). It catalyses the reaction a 14alpha-hydroxymethyl steroid + reduced [NADPH--hemoprotein reductase] + O2 = a 14alpha-formyl steroid + oxidized [NADPH--hemoprotein reductase] + 2 H2O + H(+). It carries out the reaction a 14alpha-formyl steroid + reduced [NADPH--hemoprotein reductase] + O2 = a Delta(14) steroid + formate + oxidized [NADPH--hemoprotein reductase] + H2O + 2 H(+). The enzyme catalyses lanosterol + 3 reduced [NADPH--hemoprotein reductase] + 3 O2 = 4,4-dimethyl-5alpha-cholesta-8,14,24-trien-3beta-ol + formate + 3 oxidized [NADPH--hemoprotein reductase] + 4 H2O + 4 H(+). The catalysed reaction is lanosterol + reduced [NADPH--hemoprotein reductase] + O2 = 32-hydroxylanosterol + oxidized [NADPH--hemoprotein reductase] + H2O + H(+). It catalyses the reaction 32-hydroxylanosterol + reduced [NADPH--hemoprotein reductase] + O2 = 32-oxolanosterol + oxidized [NADPH--hemoprotein reductase] + 2 H2O + H(+). It carries out the reaction 32-oxolanosterol + reduced [NADPH--hemoprotein reductase] + O2 = 4,4-dimethyl-5alpha-cholesta-8,14,24-trien-3beta-ol + formate + oxidized [NADPH--hemoprotein reductase] + H2O + 2 H(+). The enzyme catalyses eburicol + 3 reduced [NADPH--hemoprotein reductase] + 3 O2 = 14-demethyleburicol + formate + 3 oxidized [NADPH--hemoprotein reductase] + 4 H2O + 4 H(+). The catalysed reaction is eburicol + reduced [NADPH--hemoprotein reductase] + O2 = 32-hydroxyeburicol + oxidized [NADPH--hemoprotein reductase] + H2O + H(+). It catalyses the reaction 32-hydroxyeburicol + reduced [NADPH--hemoprotein reductase] + O2 = 32-oxoeburicol + oxidized [NADPH--hemoprotein reductase] + 2 H2O + H(+). It carries out the reaction 32-oxoeburicol + reduced [NADPH--hemoprotein reductase] + O2 = 14-demethyleburicol + formate + oxidized [NADPH--hemoprotein reductase] + H2O + 2 H(+). It participates in steroid metabolism; ergosterol biosynthesis. Together with cyp51A and cyp51C, encodes the sterol 14alpha-demethylase that plays a critical role in the third module of ergosterol biosynthesis pathway, being ergosterol the major sterol component in fungal membranes that participates in a variety of functions. Essential for ascospore production. The third module or late pathway involves the ergosterol synthesis itself through consecutive reactions that mainly occur in the endoplasmic reticulum (ER) membrane. In filamentous fungi, during the initial step of this module, lanosterol (lanosta-8,24-dien-3beta-ol) can be metabolized to eburicol. Sterol 14alpha-demethylase catalyzes the three-step oxidative removal of the 14alpha-methyl group (C-32) of both these sterols in the form of formate, and converts eburicol and lanosterol to 14-demethyleburicol (4,4,24-trimethylergosta-8,14,24(28)-trienol) and 4,4-dimethyl-5alpha-cholesta-8,14,24-trien-3beta-ol, respectively, which are further metabolized by other enzymes in the pathway to ergosterol. Can also use substrates not intrinsic to fungi, such as 24,25-dihydrolanosterol (DHL), producing 4,4'-dimethyl-8,14-cholestadien-3-beta-ol, but at lower rates than the endogenous substrates. This chain is Sterol 14-alpha demethylase CYP51A, found in Gibberella zeae (strain ATCC MYA-4620 / CBS 123657 / FGSC 9075 / NRRL 31084 / PH-1) (Wheat head blight fungus).